We begin with the raw amino-acid sequence, 587 residues long: Pectinesterase 2 (587 aa).

A signal peptide spans 1-40 (MAPIKEFISKFSDFKNNKKLILSSAAIALLLLASIVGIAA). N-linked (GlcNAc...) asparagine glycosylation is found at N99 and N218. The substrate site is built by T351 and Q381. The Proton donor role is filled by D404. A disulfide bond links C418 and C438. D425 acts as the Nucleophile in catalysis. Substrate is bound by residues R493 and W495.

In the N-terminal section; belongs to the PMEI family. This sequence in the C-terminal section; belongs to the pectinesterase family. As to expression, expressed in flower buds.

The protein resides in the secreted. Its subcellular location is the cell wall. It catalyses the reaction [(1-&gt;4)-alpha-D-galacturonosyl methyl ester](n) + n H2O = [(1-&gt;4)-alpha-D-galacturonosyl](n) + n methanol + n H(+). Its pathway is glycan metabolism; pectin degradation; 2-dehydro-3-deoxy-D-gluconate from pectin: step 1/5. Its function is as follows. Acts in the modification of cell walls via demethylesterification of cell wall pectin. This chain is Pectinesterase 2 (PME2), found in Arabidopsis thaliana (Mouse-ear cress).